Consider the following 496-residue polypeptide: Beta-amylase (496 aa).

Residues Asp54, His94, and Asp102 each contribute to the substrate site. Glu187 functions as the Proton donor in the catalytic mechanism. Positions 296, 301, and 343 each coordinate substrate. The active-site Proton acceptor is the Glu381. Substrate-binding positions include Asn382 to Ala383 and Arg421.

The protein belongs to the glycosyl hydrolase 14 family.

The catalysed reaction is Hydrolysis of (1-&gt;4)-alpha-D-glucosidic linkages in polysaccharides so as to remove successive maltose units from the non-reducing ends of the chains.. This Trifolium repens (Creeping white clover) protein is Beta-amylase (BMY1).